The sequence spans 175 residues: Development-specific protein S homolog (175 aa).

Beta/gamma crystallin 'Greek key' domains are found at residues 2–46 and 48–86; these read ANIT…KVPP and VKAI…KVMS. Residues 87–90 are connecting peptide; it reads VPVQ. Beta/gamma crystallin 'Greek key' domains are found at residues 91–135 and 136–175; these read PRAR…KPEG and LKVV…RITP.

This sequence belongs to the beta/gamma-crystallin family.

The protein resides in the spore. The protein localises to the perispore. In Myxococcus xanthus, this protein is Development-specific protein S homolog (ops).